The chain runs to 258 residues: Isoprenyl transferase 2 (258 aa).

Asp-39 is a catalytic residue. Asp-39 provides a ligand contact to Mg(2+). Substrate-binding positions include 40-43 (GNRR), Trp-44, Arg-52, His-57, and 85-87 (SND). Asn-88 acts as the Proton acceptor in catalysis. Substrate is bound by residues Arg-92, Arg-207, and 213–215 (RLS). Glu-226 is a binding site for Mg(2+).

The protein belongs to the UPP synthase family. Homodimer. Mg(2+) is required as a cofactor.

Its function is as follows. Catalyzes the condensation of isopentenyl diphosphate (IPP) with allylic pyrophosphates generating different type of terpenoids. In Tropheryma whipplei (strain Twist) (Whipple's bacillus), this protein is Isoprenyl transferase 2.